A 278-amino-acid chain; its full sequence is 4-deoxy-L-threo-5-hexosulose-uronate ketol-isomerase (278 aa).

Residues histidine 196, histidine 198, glutamate 203, and histidine 245 each coordinate Zn(2+).

The protein belongs to the KduI family. Requires Zn(2+) as cofactor.

It carries out the reaction 5-dehydro-4-deoxy-D-glucuronate = 3-deoxy-D-glycero-2,5-hexodiulosonate. It functions in the pathway glycan metabolism; pectin degradation; 2-dehydro-3-deoxy-D-gluconate from pectin: step 4/5. In terms of biological role, catalyzes the isomerization of 5-dehydro-4-deoxy-D-glucuronate to 3-deoxy-D-glycero-2,5-hexodiulosonate. The chain is 4-deoxy-L-threo-5-hexosulose-uronate ketol-isomerase from Shigella sonnei (strain Ss046).